The chain runs to 99 residues: Sperm protein associated with the nucleus on the X chromosome N4 (99 aa).

A compositionally biased stretch (polar residues) spans 1–10; sequence MEEPTSSTNE. The interval 1–99 is disordered; that stretch reads MEEPTSSTNE…AGSPQDGGQN (99 aa). Positions 11-22 are enriched in basic and acidic residues; sequence NKMKSPCESNKR. Residues 23–32 show a composition bias toward basic residues; it reads KVDKKKKNLH. Positions 64-78 are enriched in polar residues; it reads SNQLENNQPTESSTD.

The protein belongs to the SPAN-X family.

This chain is Sperm protein associated with the nucleus on the X chromosome N4 (SPANXN4), found in Homo sapiens (Human).